The sequence spans 136 residues: Protein PsiE homolog (136 aa).

A run of 4 helical transmembrane segments spans residues 15 to 35 (ILQT…VVFL), 55 to 75 (YELV…ALIV), 82 to 102 (FHFP…RLII), and 108 to 128 (PLDV…LWLC).

It belongs to the PsiE family.

It localises to the cell inner membrane. This chain is Protein PsiE homolog, found in Enterobacter sp. (strain 638).